Here is a 223-residue protein sequence, read N- to C-terminus: MOB-like protein phocein (223 aa).

The tract at residues 1 to 23 is disordered; that stretch reads MTAATENRTVRRNGPGTKRADWN. Cys92, Cys97, His169, and His174 together coordinate Zn(2+).

This sequence belongs to the MOB1/phocein family.

It localises to the cytoplasm. The protein resides in the perinuclear region. Its subcellular location is the membrane. It is found in the golgi apparatus. The protein localises to the golgi stack membrane. Its function is as follows. May play a role in membrane trafficking, specifically in membrane budding reactions. The chain is MOB-like protein phocein from Caenorhabditis elegans.